Consider the following 1293-residue polypeptide: Phosphoribosylformylglycinamidine synthase (1293 aa).

ATP contacts are provided by residues 305-316 and Ala676; that span reads GAATGSGGEIRD. Positions 305 to 328 are disordered; sequence GAATGSGGEIRDEGATGRGSKPKA. Mg(2+) contacts are provided by Asp677, Glu716, Asn720, and Asp884. Residue Ser886 coordinates ATP. In terms of domain architecture, Glutamine amidotransferase type-1 spans 1040–1293; sequence MAILREQGVN…MFRNARVNLG (254 aa). The active-site Nucleophile is the Cys1133. Active-site residues include His1258 and Glu1260.

This sequence in the N-terminal section; belongs to the FGAMS family. As to quaternary structure, monomer.

It localises to the cytoplasm. It carries out the reaction N(2)-formyl-N(1)-(5-phospho-beta-D-ribosyl)glycinamide + L-glutamine + ATP + H2O = 2-formamido-N(1)-(5-O-phospho-beta-D-ribosyl)acetamidine + L-glutamate + ADP + phosphate + H(+). The protein operates within purine metabolism; IMP biosynthesis via de novo pathway; 5-amino-1-(5-phospho-D-ribosyl)imidazole from N(2)-formyl-N(1)-(5-phospho-D-ribosyl)glycinamide: step 1/2. Its function is as follows. Phosphoribosylformylglycinamidine synthase involved in the purines biosynthetic pathway. Catalyzes the ATP-dependent conversion of formylglycinamide ribonucleotide (FGAR) and glutamine to yield formylglycinamidine ribonucleotide (FGAM) and glutamate. This Shewanella sp. (strain MR-7) protein is Phosphoribosylformylglycinamidine synthase.